A 186-amino-acid polypeptide reads, in one-letter code: Peptidyl-tRNA hydrolase (186 aa).

Tyr14 contacts tRNA. Residue His19 is the Proton acceptor of the active site. Positions 64, 66, and 112 each coordinate tRNA.

Belongs to the PTH family. As to quaternary structure, monomer.

It is found in the cytoplasm. It catalyses the reaction an N-acyl-L-alpha-aminoacyl-tRNA + H2O = an N-acyl-L-amino acid + a tRNA + H(+). Hydrolyzes ribosome-free peptidyl-tRNAs (with 1 or more amino acids incorporated), which drop off the ribosome during protein synthesis, or as a result of ribosome stalling. Its function is as follows. Catalyzes the release of premature peptidyl moieties from peptidyl-tRNA molecules trapped in stalled 50S ribosomal subunits, and thus maintains levels of free tRNAs and 50S ribosomes. This Geobacillus kaustophilus (strain HTA426) protein is Peptidyl-tRNA hydrolase.